We begin with the raw amino-acid sequence, 994 residues long: Seizure protein 6 homolog (994 aa).

Residues 1–19 (MRPVALLLLPSLLALLAHG) form the signal peptide. The Extracellular portion of the chain corresponds to 20–925 (LSLEAPTVGK…AASSTLDAAH (906 aa)). The tract at residues 28 to 50 (GKGQAPGIEETDGELTAAPTPEQ) is disordered. O-glycosylated at two sites stretches follow at residues 38–47 (TDGELTAAPT) and 59–63 (TTAPT). Disordered stretches follow at residues 88–146 (LRPA…ESES), 171–191 (IAST…PGDM), and 241–261 (PGPC…PTDL). The segment covering 93 to 107 (PFQPDPPAPFTPSPL) has biased composition (pro residues). Composition is skewed to polar residues over residues 112-123 (NQDSRPVFTSPT) and 172-185 (ASTT…TPTQ). Asn289 carries N-linked (GlcNAc...) asparagine glycosylation. The region spanning 355–414 (LSCHFPRRPAYGDVTVTSLHPGGSARFHCATGYQLKGARHLTCLNATQPFWDSKEPVCIA) is the Sushi 1 domain. 12 disulfides stabilise this stretch: Cys357-Cys397, Cys383-Cys412, Cys416-Cys443, Cys532-Cys574, Cys559-Cys589, Cys593-Cys619, Cys710-Cys752, Cys738-Cys765, Cys771-Cys813, Cys799-Cys830, Cys838-Cys880, and Cys866-Cys895. N-linked (GlcNAc...) asparagine glycans are attached at residues Asn399, Asn436, and Asn541. The 112-residue stretch at 416–527 (CGGVIRNATT…AGMALRYEAF (112 aa)) folds into the CUB 1 domain. Residues 530–591 (GHCYEPFVKY…WNETEPACRA (62 aa)) form the Sushi 2 domain. One can recognise a CUB 2 domain in the interval 593–704 (CSGEITDSAG…QGFVIHFFEV (112 aa)). Sushi domains follow at residues 708 to 767 (DTCP…SCQR), 769 to 832 (TSCH…KCLL), and 836 to 897 (KPCH…ICRA). The chain crosses the membrane as a helical span at residues 926 to 946 (IAAAIFLPLVAMVLLVGGVYF). Residues 947 to 994 (YFSRLQGKSSLQLPRPRPRPYNRITIESAFDNPTYETGSLSFAGDERI) lie on the Cytoplasmic side of the membrane.

This sequence belongs to the SEZ6 family. In terms of processing, glycosylated.

Its subcellular location is the cell membrane. May play a role in cell-cell recognition and in neuronal membrane signaling. Seems to be important for the achievement of the necessary balance between dendrite elongation and branching during the elaboration of a complex dendritic arbor. Involved in the development of appropriate excitatory synaptic connectivity. In Homo sapiens (Human), this protein is Seizure protein 6 homolog (SEZ6).